The primary structure comprises 155 residues: Small ribosomal subunit protein uS7 (155 aa).

Belongs to the universal ribosomal protein uS7 family. In terms of assembly, part of the 30S ribosomal subunit. Contacts proteins S9 and S11.

One of the primary rRNA binding proteins, it binds directly to 16S rRNA where it nucleates assembly of the head domain of the 30S subunit. Is located at the subunit interface close to the decoding center, probably blocks exit of the E-site tRNA. The chain is Small ribosomal subunit protein uS7 from Prosthecochloris aestuarii (strain DSM 271 / SK 413).